The primary structure comprises 244 residues: THO complex subunit 4A (244 aa).

A disordered region spans residues 1–82 (MSTGLDMSLD…EDHRSGRSSA (82 aa)). N-acetylserine is present on Ser-2. The span at 21–35 (GGAGPARGTGSGSGP) shows a compositional bias: gly residues. The segment covering 67 to 77 (MFSDRSEDHRS) has biased composition (basic and acidic residues). One can recognise an RRM domain in the interval 88 to 165 (TKLYISNLDY…KPMKIEIVGT (78 aa)). The interval 169–244 (TAAAPSGRPA…KYHSGDMETN (76 aa)) is disordered. Positions 187-211 (WRGGQGRGGQQRGGGRGGGGRGGGG) are enriched in gly residues. Over residues 220–244 (PAEKISAEDLDADLDKYHSGDMETN) the composition is skewed to basic and acidic residues.

This sequence belongs to the ALYREF family.

It localises to the nucleus. The protein resides in the nucleoplasm. The protein localises to the nucleolus. In terms of biological role, export adapter involved in nuclear export of spliced and unspliced mRNA. The protein is THO complex subunit 4A (ALY1) of Arabidopsis thaliana (Mouse-ear cress).